Reading from the N-terminus, the 1382-residue chain is Insulin receptor (1382 aa).

Residues 1 to 27 (MATGGRRGAAAAPLLVAVAALLLGAAG) form the signal peptide. Extracellular-side segments run 28–758 (HLYP…PRPS) and 763–956 (SLGD…NIAK). A disulfide bridge links cysteine 35 with cysteine 53. Residues asparagine 43, asparagine 52, asparagine 105, and asparagine 138 are each glycosylated (N-linked (GlcNAc...) asparagine). 9 cysteine pairs are disulfide-bonded: cysteine 153/cysteine 182, cysteine 186/cysteine 209, cysteine 196/cysteine 215, cysteine 219/cysteine 228, cysteine 223/cysteine 234, cysteine 235/cysteine 243, cysteine 239/cysteine 252, cysteine 255/cysteine 264, and cysteine 268/cysteine 280. Residue asparagine 242 is glycosylated (N-linked (GlcNAc...) asparagine). An N-linked (GlcNAc...) asparagine glycan is attached at asparagine 282. 5 cysteine pairs are disulfide-bonded: cysteine 286–cysteine 311, cysteine 293–cysteine 301, cysteine 315–cysteine 328, cysteine 331–cysteine 335, and cysteine 339–cysteine 360. An N-linked (GlcNAc...) asparagine glycan is attached at asparagine 322. Residue asparagine 364 is glycosylated (N-linked (GlcNAc...) asparagine). Serine 400 bears the Phosphoserine mark. Tyrosine 401 is subject to Phosphotyrosine. At serine 407 the chain carries Phosphoserine. Asparagine 424 and asparagine 445 each carry an N-linked (GlcNAc...) asparagine glycan. Cysteine 462 and cysteine 495 are disulfide-bonded. 4 N-linked (GlcNAc...) asparagine glycosylation sites follow: asparagine 541, asparagine 633, asparagine 651, and asparagine 698. Positions 624–726 (VPLDPISVSN…SQILKELEES (103 aa)) constitute a Fibronectin type-III 1 domain. Disulfide bonds link cysteine 674–cysteine 899 and cysteine 825–cysteine 834. Positions 686–708 (SPPFESEDSQKHNQSEYEDSAGE) are disordered. Positions 733–741 (EDYLHNVVF) are insulin-binding. The interval 746-766 (TSSGTGAEDPRPSRKRRSLGD) is disordered. Fibronectin type-III domains lie at 757–842 (PSRK…YVSA) and 853–947 (IVGP…VTDY). 2 N-linked (GlcNAc...) asparagine glycosylation sites follow: asparagine 769 and asparagine 782. Asparagine 920 and asparagine 933 each carry an N-linked (GlcNAc...) asparagine glycan. Residues 957–979 (IIIGPLIFVFLFSVVIGSIYLFL) form a helical membrane-spanning segment. Topologically, residues 980–1382 (RKRQPDGPLG…ILTLPRSNPS (403 aa)) are cytoplasmic. Phosphotyrosine; by autocatalysis occurs at positions 992, 999, and 1011. Residue tyrosine 999 is a region of interest, important for interaction with IRS1, SHC1 and STAT5B. The 276-residue stretch at 1023–1298 (ITLLRELGQG…LLKDDLHPSF (276 aa)) folds into the Protein kinase domain. 2 residues coordinate ATP: serine 1033 and lysine 1057. Lysine 1079 is covalently cross-linked (Glycyl lysine isopeptide (Lys-Gly) (interchain with G-Cter in ubiquitin)). An S-nitrosocysteine modification is found at cysteine 1083. An ATP-binding site is contributed by 1104 to 1110 (ELMAHGD). Aspartate 1159 acts as the Proton donor/acceptor in catalysis. Residues 1163–1164 (RN) and aspartate 1177 contribute to the ATP site. 5 positions are modified to phosphotyrosine; by autocatalysis: tyrosine 1185, tyrosine 1189, tyrosine 1190, tyrosine 1355, and tyrosine 1361. Positions 1360 to 1382 (PYTHMNGGKKNGRILTLPRSNPS) are disordered. Residues 1361–1364 (YTHM) form a PIK3R1-binding region.

It belongs to the protein kinase superfamily. Tyr protein kinase family. Insulin receptor subfamily. Tetramer of 2 alpha and 2 beta chains linked by disulfide bonds. The alpha chains carry the insulin-binding regions, while the beta chains carry the kinase domain. Forms a hybrid receptor with IGF1R, the hybrid is a tetramer consisting of 1 alpha chain and 1 beta chain of INSR and 1 alpha chain and 1 beta chain of IGF1R. Interacts with SORBS1 but dissociates from it following insulin stimulation. Binds SH2B2. Activated form of INSR interacts (via Tyr-999) with the PTB/PID domains of IRS1 and SHC1. The sequences surrounding the phosphorylated NPXY motif contribute differentially to either IRS1 or SHC1 recognition. Interacts (via tyrosines in the C-terminus) with IRS2 (via PTB domain and 591-786 AA); the 591-786 would be the primary anchor of IRS2 to INSR while the PTB domain would have a stabilizing action on the interaction with INSR. Interacts with the SH2 domains of the 85 kDa regulatory subunit of PI3K (PIK3R1) in vitro, when autophosphorylated on tyrosine residues. Interacts with SOCS7. Interacts (via the phosphorylated Tyr-999), with SOCS3. Interacts (via the phosphorylated Tyr-1185, Tyr-1189, Tyr-1190) with SOCS1. Interacts with CAV2 (tyrosine-phosphorylated form); the interaction is increased with 'Tyr-27'phosphorylation of CAV2. Interacts with ARRB2. Interacts with GRB10; this interaction blocks the association between IRS1/IRS2 and INSR, significantly reduces insulin-stimulated tyrosine phosphorylation of IRS1 and IRS2 and thus decreases insulin signaling. Interacts with GRB7. Interacts with PDPK1. Interacts (via Tyr-1190) with GRB14 (via BPS domain); this interaction protects the tyrosines in the activation loop from dephosphorylation, but promotes dephosphorylation of Tyr-999, this results in decreased interaction with, and phosphorylation of, IRS1. Interacts (via subunit alpha) with ENPP1 (via 485-599 AA); this interaction blocks autophosphorylation. Interacts with PTPRE; this interaction is dependent of Tyr-1185, Tyr-1189 and Tyr-1190 of the INSR. Interacts with STAT5B (via SH2 domain). Interacts with PTPRF. Interacts with ATIC; ATIC together with PRKAA2/AMPK2 and HACD3/PTPLAD1 is proposed to be part of a signaling netwok regulating INSR autophosphorylation and endocytosis. Interacts with the cone snail venom insulin Con-Ins G1. Interacts with the insulin receptor SORL1; this interaction strongly increases its surface exposure, hence strengthens insulin signal reception. Interacts (tyrosine phosphorylated) with CCDC88A/GIV (via SH2-like region); binding requires autophosphorylation of the INSR C-terminal region. Interacts with GNAI3; the interaction is probably mediated by CCDC88A/GIV. Interacts with LMBRD1. Interacts (in response to insulin stimulation) with NCK1; this interaction may recruit PTPN1 to mediate INSR dephosphorylation. Interacts with CD248; this interaction diminishes INSR autophosphorylation. After being transported from the endoplasmic reticulum to the Golgi apparatus, the single glycosylated precursor is further glycosylated and then cleaved, followed by its transport to the plasma membrane. In terms of processing, autophosphorylated on tyrosine residues in response to insulin. Phosphorylation of Tyr-999 is required for binding to IRS1, SHC1 and STAT5B. Dephosphorylated by PTPRE at Tyr-999, Tyr-1185, Tyr-1189 and Tyr-1190. May also be phosphorylated at Tyr-1185 and Tyr-1190 by mTORC2. Dephosphorylated by PTPRF and PTPN1. Dephosphorylated by PTPN2; down-regulates insulin-induced signaling. Dephosphorylation at Tyr-1189 and Tyr-1190 requires the SH2/SH3 adapter protein NCK1, probably to recruit its interaction partner PTPN1. Post-translationally, S-nitrosylation at Cys-1083 by BLVRB inhibits the receptor tyrosine kinase, thereby inhibiting insulin signaling. Ubiquitinated by MARCHF1; leading to degradation thereby reducing surface INSR expression. Isoform Long and isoform Short are predominantly expressed in tissue targets of insulin metabolic effects: liver, adipose tissue and skeletal muscle but are also expressed in the peripheral nerve, kidney, pulmonary alveoli, pancreatic acini, placenta vascular endothelium, fibroblasts, monocytes, granulocytes, erythrocytes and skin. Isoform Short is preferentially expressed in fetal cells such as fetal fibroblasts, muscle, liver and kidney. Found as a hybrid receptor with IGF1R in muscle, heart, kidney, adipose tissue, skeletal muscle, hepatoma, fibroblasts, spleen and placenta (at protein level). Overexpressed in several tumors, including breast, colon, lung, ovary, and thyroid carcinomas.

Its subcellular location is the cell membrane. It is found in the late endosome. It localises to the lysosome. The catalysed reaction is L-tyrosyl-[protein] + ATP = O-phospho-L-tyrosyl-[protein] + ADP + H(+). Its activity is regulated as follows. Activated in response to insulin. Autophosphorylation activates the kinase activity. PTPN1, PTPRE and PTPRF dephosphorylate important tyrosine residues, thereby reducing INSR activity. Inhibited by ENPP1. GRB10 and GRB14 inhibit the catalytic activity of the INSR, they block access of substrates to the activated receptor. SOCS1 and SOCS3 act as negative regulators of INSR activity, they bind to the activated INRS and interfere with the phosphorylation of INSR substrates. Its function is as follows. Receptor tyrosine kinase which mediates the pleiotropic actions of insulin. Binding of insulin leads to phosphorylation of several intracellular substrates, including, insulin receptor substrates (IRS1, 2, 3, 4), SHC, GAB1, CBL and other signaling intermediates. Each of these phosphorylated proteins serve as docking proteins for other signaling proteins that contain Src-homology-2 domains (SH2 domain) that specifically recognize different phosphotyrosine residues, including the p85 regulatory subunit of PI3K and SHP2. Phosphorylation of IRSs proteins lead to the activation of two main signaling pathways: the PI3K-AKT/PKB pathway, which is responsible for most of the metabolic actions of insulin, and the Ras-MAPK pathway, which regulates expression of some genes and cooperates with the PI3K pathway to control cell growth and differentiation. Binding of the SH2 domains of PI3K to phosphotyrosines on IRS1 leads to the activation of PI3K and the generation of phosphatidylinositol-(3, 4, 5)-triphosphate (PIP3), a lipid second messenger, which activates several PIP3-dependent serine/threonine kinases, such as PDPK1 and subsequently AKT/PKB. The net effect of this pathway is to produce a translocation of the glucose transporter SLC2A4/GLUT4 from cytoplasmic vesicles to the cell membrane to facilitate glucose transport. Moreover, upon insulin stimulation, activated AKT/PKB is responsible for: anti-apoptotic effect of insulin by inducing phosphorylation of BAD; regulates the expression of gluconeogenic and lipogenic enzymes by controlling the activity of the winged helix or forkhead (FOX) class of transcription factors. Another pathway regulated by PI3K-AKT/PKB activation is mTORC1 signaling pathway which regulates cell growth and metabolism and integrates signals from insulin. AKT mediates insulin-stimulated protein synthesis by phosphorylating TSC2 thereby activating mTORC1 pathway. The Ras/RAF/MAP2K/MAPK pathway is mainly involved in mediating cell growth, survival and cellular differentiation of insulin. Phosphorylated IRS1 recruits GRB2/SOS complex, which triggers the activation of the Ras/RAF/MAP2K/MAPK pathway. In addition to binding insulin, the insulin receptor can bind insulin-like growth factors (IGFI and IGFII). Isoform Short has a higher affinity for IGFII binding. When present in a hybrid receptor with IGF1R, binds IGF1. PubMed:12138094 shows that hybrid receptors composed of IGF1R and INSR isoform Long are activated with a high affinity by IGF1, with low affinity by IGF2 and not significantly activated by insulin, and that hybrid receptors composed of IGF1R and INSR isoform Short are activated by IGF1, IGF2 and insulin. In contrast, PubMed:16831875 shows that hybrid receptors composed of IGF1R and INSR isoform Long and hybrid receptors composed of IGF1R and INSR isoform Short have similar binding characteristics, both bind IGF1 and have a low affinity for insulin. In adipocytes, inhibits lipolysis. The chain is Insulin receptor (INSR) from Homo sapiens (Human).